The primary structure comprises 548 residues: Chaperonin GroEL (548 aa).

Residues 30-33 (TLGP), Lys51, 87-91 (DGTTT), Gly415, and Asp496 each bind ATP.

This sequence belongs to the chaperonin (HSP60) family. In terms of assembly, forms a cylinder of 14 subunits composed of two heptameric rings stacked back-to-back. Interacts with the co-chaperonin GroES.

The protein localises to the cytoplasm. It catalyses the reaction ATP + H2O + a folded polypeptide = ADP + phosphate + an unfolded polypeptide.. Its function is as follows. Together with its co-chaperonin GroES, plays an essential role in assisting protein folding. The GroEL-GroES system forms a nano-cage that allows encapsulation of the non-native substrate proteins and provides a physical environment optimized to promote and accelerate protein folding. This Haemophilus influenzae (strain ATCC 51907 / DSM 11121 / KW20 / Rd) protein is Chaperonin GroEL.